The primary structure comprises 133 residues: Large ribosomal subunit protein bL20 (133 aa).

This sequence belongs to the bacterial ribosomal protein bL20 family.

In terms of biological role, binds directly to 23S ribosomal RNA and is necessary for the in vitro assembly process of the 50S ribosomal subunit. It is not involved in the protein synthesizing functions of that subunit. This is Large ribosomal subunit protein bL20 from Mesorhizobium japonicum (strain LMG 29417 / CECT 9101 / MAFF 303099) (Mesorhizobium loti (strain MAFF 303099)).